The sequence spans 24 residues: MNILHICVTSKWFNIDNKIVDHRP.

This Escherichia coli O157:H7 protein is Tryptophanase operon leader peptide (tnaL).